The chain runs to 206 residues: Dephospho-CoA kinase (206 aa).

In terms of domain architecture, DPCK spans 4–200; it reads TVALTGGIGS…ASYLKLASQF (197 aa). ATP is bound at residue 12 to 17; it reads GSGKST.

It belongs to the CoaE family.

It is found in the cytoplasm. The enzyme catalyses 3'-dephospho-CoA + ATP = ADP + CoA + H(+). It participates in cofactor biosynthesis; coenzyme A biosynthesis; CoA from (R)-pantothenate: step 5/5. In terms of biological role, catalyzes the phosphorylation of the 3'-hydroxyl group of dephosphocoenzyme A to form coenzyme A. The protein is Dephospho-CoA kinase of Salmonella choleraesuis (strain SC-B67).